We begin with the raw amino-acid sequence, 493 residues long: Glutamate--tRNA ligase (493 aa).

The short motif at 10 to 20 is the 'HIGH' region element; the sequence is PSPTGTPHVGL. The 'KMSKS' region signature appears at 254–258; that stretch reads KLSKR. Lys-257 serves as a coordination point for ATP.

It belongs to the class-I aminoacyl-tRNA synthetase family. Glutamate--tRNA ligase type 1 subfamily. Monomer.

It is found in the cytoplasm. The enzyme catalyses tRNA(Glu) + L-glutamate + ATP = L-glutamyl-tRNA(Glu) + AMP + diphosphate. Its function is as follows. Catalyzes the attachment of glutamate to tRNA(Glu) in a two-step reaction: glutamate is first activated by ATP to form Glu-AMP and then transferred to the acceptor end of tRNA(Glu). This is Glutamate--tRNA ligase from Corynebacterium glutamicum (strain ATCC 13032 / DSM 20300 / JCM 1318 / BCRC 11384 / CCUG 27702 / LMG 3730 / NBRC 12168 / NCIMB 10025 / NRRL B-2784 / 534).